We begin with the raw amino-acid sequence, 335 residues long: Glutaredoxin-3 (335 aa).

N-acetylalanine is present on alanine 2. Positions 2 to 117 (AAGAAEAAVA…LTKKVQRHAS (116 aa)) constitute a Thioredoxin domain. Phosphoserine occurs at positions 117 and 120. Glutaredoxin domains are found at residues 144-236 (APCM…PKLE) and 237-335 (ERLK…RGEN). Residues cysteine 159 and cysteine 261 each coordinate [2Fe-2S] cluster.

In terms of assembly, homodimer; the homodimer is independent of 2Fe-2S clusters. Heterotrimer; forms a heterotrimeric complex composed by two BOLA2 molecules and one GLRX3 molecule; linked by [2Fe-2S] clusters. Interacts (via N-terminus) with PRKCQ/PKC-theta. Interacts (via C-terminus) with CSRP3. Interacts with CSRP2. As to expression, expressed in heart, spleen, testis and, to a lower extent, in thymus and peripheral blood leukocytes. Weakly expressed in lung, placenta, colon and small intestine.

The protein localises to the cytoplasm. It is found in the cytosol. It localises to the cell cortex. The protein resides in the myofibril. Its subcellular location is the sarcomere. The protein localises to the z line. In terms of biological role, together with BOLA2, acts as a cytosolic iron-sulfur (Fe-S) cluster assembly factor that facilitates [2Fe-2S] cluster insertion into a subset of cytosolic proteins. Acts as a critical negative regulator of cardiac hypertrophy and a positive inotropic regulator. Required for hemoglobin maturation. Does not possess any thyoredoxin activity since it lacks the conserved motif that is essential for catalytic activity. The sequence is that of Glutaredoxin-3 (GLRX3) from Homo sapiens (Human).